Reading from the N-terminus, the 495-residue chain is Leucine aminopeptidase 2 (495 aa).

The N-terminal stretch at 1-21 (MKSQLLSLAVAVTTISQGVVG) is a signal peptide. Residues 124 to 218 (PPASKIMAEL…EDGKNLATLV (95 aa)) enclose the PA domain. Asn142 and Asn235 each carry an N-linked (GlcNAc...) asparagine glycan. Positions 259 and 271 each coordinate Zn(2+). An N-linked (GlcNAc...) asparagine glycan is attached at Asn272. The active-site Proton acceptor is Glu303. 2 residues coordinate Zn(2+): Glu304 and Asp332. Residue Asn352 is glycosylated (N-linked (GlcNAc...) asparagine). A Zn(2+)-binding site is contributed by His430.

Belongs to the peptidase M28 family. M28A subfamily. As to quaternary structure, monomer. Requires Zn(2+) as cofactor.

It is found in the secreted. Its activity is regulated as follows. Activity is inhibited by EDTA, o-phenanthroline, bestatin and amastatin. In terms of biological role, extracellular aminopeptidase that releases a wide variety of amino acids from natural peptides and contributes to pathogenicity. The polypeptide is Leucine aminopeptidase 2 (LAP2) (Trichophyton rubrum (Athlete's foot fungus)).